We begin with the raw amino-acid sequence, 325 residues long: Biotin synthase (325 aa).

The Radical SAM core domain occupies 49-279; that stretch reads VGDKVELCSI…DKNIRYAGGR (231 aa). Residues C66, C70, and C73 each contribute to the [4Fe-4S] cluster site. 3 residues coordinate [2Fe-2S] cluster: C144, C204, and R274.

The protein belongs to the radical SAM superfamily. Biotin synthase family. In terms of assembly, homodimer. It depends on [4Fe-4S] cluster as a cofactor. [2Fe-2S] cluster serves as cofactor.

The enzyme catalyses (4R,5S)-dethiobiotin + (sulfur carrier)-SH + 2 reduced [2Fe-2S]-[ferredoxin] + 2 S-adenosyl-L-methionine = (sulfur carrier)-H + biotin + 2 5'-deoxyadenosine + 2 L-methionine + 2 oxidized [2Fe-2S]-[ferredoxin]. The protein operates within cofactor biosynthesis; biotin biosynthesis; biotin from 7,8-diaminononanoate: step 2/2. Catalyzes the conversion of dethiobiotin (DTB) to biotin by the insertion of a sulfur atom into dethiobiotin via a radical-based mechanism. In Carboxydothermus hydrogenoformans (strain ATCC BAA-161 / DSM 6008 / Z-2901), this protein is Biotin synthase.